A 105-amino-acid chain; its full sequence is Large ribosomal subunit protein bL21 (105 aa).

It belongs to the bacterial ribosomal protein bL21 family. Part of the 50S ribosomal subunit. Contacts protein L20.

Its function is as follows. This protein binds to 23S rRNA in the presence of protein L20. The sequence is that of Large ribosomal subunit protein bL21 from Parabacteroides distasonis (strain ATCC 8503 / DSM 20701 / CIP 104284 / JCM 5825 / NCTC 11152).